Consider the following 161-residue polypeptide: Protein-export protein SecB (161 aa).

Belongs to the SecB family. In terms of assembly, homotetramer, a dimer of dimers. One homotetramer interacts with 1 SecA dimer.

The protein resides in the cytoplasm. Its function is as follows. One of the proteins required for the normal export of preproteins out of the cell cytoplasm. It is a molecular chaperone that binds to a subset of precursor proteins, maintaining them in a translocation-competent state. It also specifically binds to its receptor SecA. The chain is Protein-export protein SecB from Pseudomonas fluorescens (strain Pf0-1).